The chain runs to 295 residues: Probable intramembrane protease C25B8.17 (295 aa).

A helical transmembrane segment spans residues 1-21 (MEGVILASSALFTVYIGAKWS). The Cytoplasmic portion of the chain corresponds to 22–35 (AQEEEPEEKQLINK). Residues 36 to 56 (RLAVLFPIFGGVTLVLMYLAL) traverse the membrane as a helical segment. The Lumenal portion of the chain corresponds to 57-63 (RYLSKEY). Residues 64 to 84 (IQLILQGYASLASIICFVRSF) traverse the membrane as a helical segment. At 85 to 89 (NPKTT) the chain is on the cytoplasmic side. A helical transmembrane segment spans residues 90-106 (FGKITATMSSIAIALFY). The Lumenal portion of the chain corresponds to 107-111 (FKTKH). Residues 112 to 130 (WMASNILAWALAANSISIM) traverse the membrane as a helical segment. Residues 131 to 139 (RIDSYNTGA) are Cytoplasmic-facing. Residues 140 to 160 (LLLGALFFYDIYFVFGTEVMV) traverse the membrane as a helical segment. Residue aspartate 149 is part of the active site. Residues 161–183 (TVATGIDIPAKYVLPQFKNPTRL) are Lumenal-facing. Residues 184–204 (SMLGLGDIVMPGLMLALMYRF) traverse the membrane as a helical segment. Aspartate 190 is a catalytic residue. Over 205–221 (DLHYYINSTSQPKKHST) the chain is Cytoplasmic. The helical transmembrane segment at 222 to 244 (YFRNTFIAYGLGLGVTNFALYYF) threads the bilayer. Topologically, residues 245-249 (KAAQP) are lumenal. Residues 249–251 (PAL) carry the PAL motif. Residues 250 to 268 (ALLYLSPACIVAPLLTAWY) traverse the membrane as a helical segment. At 269 to 295 (RDELKTLFSFRSETEDETDEQDKCKST) the chain is on the cytoplasmic side.

Belongs to the peptidase A22B family.

It is found in the endoplasmic reticulum membrane. The protein localises to the golgi apparatus membrane. This is Probable intramembrane protease C25B8.17 from Schizosaccharomyces pombe (strain 972 / ATCC 24843) (Fission yeast).